A 624-amino-acid polypeptide reads, in one-letter code: Phosphomethylpyrimidine synthase (624 aa).

Residues N231, M260, Y289, H325, 345 to 347, 386 to 389, and E425 each bind substrate; these read SRG and DGLR. H429 contributes to the Zn(2+) binding site. Y452 lines the substrate pocket. Residue H493 participates in Zn(2+) binding. Residues C573, C576, and C581 each coordinate [4Fe-4S] cluster.

It belongs to the ThiC family. As to quaternary structure, homodimer. It depends on [4Fe-4S] cluster as a cofactor.

It catalyses the reaction 5-amino-1-(5-phospho-beta-D-ribosyl)imidazole + S-adenosyl-L-methionine = 4-amino-2-methyl-5-(phosphooxymethyl)pyrimidine + CO + 5'-deoxyadenosine + formate + L-methionine + 3 H(+). Its pathway is cofactor biosynthesis; thiamine diphosphate biosynthesis. Functionally, catalyzes the synthesis of the hydroxymethylpyrimidine phosphate (HMP-P) moiety of thiamine from aminoimidazole ribotide (AIR) in a radical S-adenosyl-L-methionine (SAM)-dependent reaction. The chain is Phosphomethylpyrimidine synthase from Myxococcus xanthus (strain DK1622).